Here is a 148-residue protein sequence, read N- to C-terminus: MAVASDFYLRYYVGHKGKFGHEFLEFEFRPDGKLRYANNSNYKNDVMIRKEAYVHKSVMEELKRIIDDSEITKEDDALWPPPDRVGRQELEIVIGDEHISFTTSKIGSLIDVNQSKDPEGLRVFYYLVQDLKCLVFSLIGLHFKIKPI.

Alanine 2 is subject to N-acetylalanine.

Belongs to the mago nashi family. In terms of assembly, component of the pre-catalytic, catalytic and post-catalytic spliceosome complexes. Heterodimer with RBM8A. Core component of the mRNA splicing-dependent exon junction complex (EJC); the core complex contains CASC3, EIF4A3, MAGOH or MAGOHB, and RBM8A. Ubiquitous.

Its subcellular location is the nucleus. In terms of biological role, required for pre-mRNA splicing as component of the spliceosome. Plays a redundant role with MAGOH in the exon junction complex and in the nonsense-mediated decay (NMD) pathway. The sequence is that of Protein mago nashi homolog 2 (MAGOHB) from Homo sapiens (Human).